A 972-amino-acid chain; its full sequence is Leucine--tRNA ligase (972 aa).

The short motif at 78–89 is the 'HIGH' region element; the sequence is PYPSGDGLHVGH. The 'KMSKS' region signature appears at 741-745; that stretch reads KIGKS. An ATP-binding site is contributed by K744.

Belongs to the class-I aminoacyl-tRNA synthetase family.

The protein resides in the cytoplasm. The enzyme catalyses tRNA(Leu) + L-leucine + ATP = L-leucyl-tRNA(Leu) + AMP + diphosphate. This Mycobacterium leprae (strain Br4923) protein is Leucine--tRNA ligase.